Reading from the N-terminus, the 138-residue chain is Cysteine desulfuration protein SufE (138 aa).

Cys-51 serves as the catalytic Cysteine persulfide intermediate.

This sequence belongs to the SufE family. In terms of assembly, homodimer. Interacts with SufS.

It localises to the cytoplasm. Its pathway is cofactor biosynthesis; iron-sulfur cluster biosynthesis. In terms of biological role, participates in cysteine desulfuration mediated by SufS. Cysteine desulfuration mobilizes sulfur from L-cysteine to yield L-alanine and constitutes an essential step in sulfur metabolism for biosynthesis of a variety of sulfur-containing biomolecules. Functions as a sulfur acceptor for SufS, by mediating the direct transfer of the sulfur atom from the S-sulfanylcysteine of SufS, an intermediate product of cysteine desulfuration process. In Klebsiella pneumoniae subsp. pneumoniae (strain ATCC 700721 / MGH 78578), this protein is Cysteine desulfuration protein SufE.